Here is a 210-residue protein sequence, read N- to C-terminus: Keratin-associated protein 26-1 (210 aa).

It belongs to the PMG family. Interacts with hair keratins. As to expression, localized high up in the well differentiated portion of the hair follicle cuticle (about 10-15 cell layers above the apex of the dermal papilla).

Functionally, in the hair cortex, hair keratin intermediate filaments are embedded in an interfilamentous matrix, consisting of hair keratin-associated proteins (KRTAP), which are essential for the formation of a rigid and resistant hair shaft through their extensive disulfide bond cross-linking with abundant cysteine residues of hair keratins. The matrix proteins include the high-sulfur and high-glycine-tyrosine keratins. This is Keratin-associated protein 26-1 (KRTAP26-1) from Homo sapiens (Human).